A 391-amino-acid chain; its full sequence is Multidrug resistance protein MdtL (391 aa).

The Cytoplasmic portion of the chain corresponds to 1–3 (MSR). The helical transmembrane segment at 4–24 (FLICSFALVLLYPAGIDMYLV) threads the bilayer. At 25 to 37 (GLPRIAADLNASE) the chain is on the periplasmic side. Residues 38 to 58 (AQLHIAFSVYLAGMAAAMLFA) traverse the membrane as a helical segment. Topologically, residues 59–75 (GKMADRSGRKPVAIPGS) are cytoplasmic. Residues 76 to 96 (ALFIIASVFCSLAETSTLFLA) traverse the membrane as a helical segment. Residues 97–98 (GR) are Periplasmic-facing. A helical transmembrane segment spans residues 99-119 (FLQGLGAGCCYVVAFAILRDT). The Cytoplasmic portion of the chain corresponds to 120 to 130 (LDDRRRAKVLS). The chain crosses the membrane as a helical span at residues 131–151 (LLNGITCIIPVLAPVLGHLIM). Residues 152–157 (LKFPWQ) are Periplasmic-facing. The chain crosses the membrane as a helical span at residues 158–178 (SLFWAMAMMGIAVLMLSLFIL). At 179-202 (KETRPASPAASDKPRENSESLLNR) the chain is on the cytoplasmic side. A helical transmembrane segment spans residues 203-222 (FFLSRVVITTLSVSVILTFV). The Periplasmic segment spans residues 223-244 (NTSPVLLMEIMGFERGEYATIM). A helical membrane pass occupies residues 245–265 (ALTAGVSMTFSFSTPFALGIF). Topologically, residues 266–268 (KPR) are cytoplasmic. A helical membrane pass occupies residues 269–289 (TLMITSQVLFLAAGITLAVSP). Over 290-292 (SHA) the chain is Periplasmic. The chain crosses the membrane as a helical span at residues 293-313 (VSLFGITLICAGFSVGFGVAM). At 314–330 (SQALGPFSLRAGVASST) the chain is on the cytoplasmic side. Residues 331–351 (LGIAQVCGSSLWIWLAAVVGI) form a helical membrane-spanning segment. At 352 to 355 (GAWN) the chain is on the periplasmic side. The helical transmembrane segment at 356–376 (MLIGILIACSIVSLLLIMFVA) threads the bilayer. Residues 377 to 391 (PGRPVAAHEEIHHHA) are Cytoplasmic-facing.

It belongs to the major facilitator superfamily. DHA1 family. MdtL (TC 2.A.1.2.22) subfamily.

The protein resides in the cell inner membrane. The protein is Multidrug resistance protein MdtL of Shigella flexneri serotype 5b (strain 8401).